We begin with the raw amino-acid sequence, 175 residues long: MSRVAKKPVSLPKGVELNVQPGLVSVKGPKGTLTLPKPAGVEIAIDGGVATLSANDPSQIALTGTVRAILANMVKGVSEGFERKLELVGVGYRAAMQGKDLSLALGFSHPLVFVAPEGITLSTPTQTEIVVQGADKQRVGEVAAKIRGFRPPEPYKGKGVKYAGEVIIRKEAKKA.

It belongs to the universal ribosomal protein uL6 family. In terms of assembly, part of the 50S ribosomal subunit.

This protein binds to the 23S rRNA, and is important in its secondary structure. It is located near the subunit interface in the base of the L7/L12 stalk, and near the tRNA binding site of the peptidyltransferase center. The chain is Large ribosomal subunit protein uL6 from Xanthomonas axonopodis pv. citri (strain 306).